A 263-amino-acid chain; its full sequence is 7beta-hydroxysteroid dehydrogenase (263 aa).

NADP(+)-binding positions include 17 to 21 (TEGVG), 40 to 41 (RR), and 66 to 67 (DF). The Proton acceptor role is filled by tyrosine 156. NADP(+) is bound at residue serine 240.

It belongs to the short-chain dehydrogenases/reductases (SDR) family.

It catalyses the reaction a 7beta-hydroxysteroid + NADP(+) = a 7-oxosteroid + NADPH + H(+). It carries out the reaction 7-oxolithocholate + NADPH + H(+) = ursodeoxycholate + NADP(+). 7beta-hydroxysteroid dehydrogenase that catalyzes the reduction of the 7-oxo group of 7-oxo-lithocholate (7-oxo-LCA), to yield ursodeoxycholate (UDCA). As R.gnavus is a common core bacterium of the human gut microbiota, this enzyme contributes to the formation of UDCA in the human colon. UDCA is regarded as a chemopreventive beneficial secondary bile acid due to its low hydrophobicity; it protects hepatocytes and bile duct epithelial cells against necrosis and apoptosis induced by more hydrophobic secondary bile acids like deoxycholate (DCA). This enzyme is also able to catalyze the reverse reaction in vitro, i.e. the oxidation of the 7beta-hydroxy group of UDCA to 7-oxo-LCA, but much less efficiently than the reduction reaction. This Mediterraneibacter gnavus (strain ATCC 29149 / DSM 114966 / JCM 6515 / VPI C7-9) (Ruminococcus gnavus) protein is 7beta-hydroxysteroid dehydrogenase.